Consider the following 182-residue polypeptide: Adenine phosphoribosyltransferase (182 aa).

It belongs to the purine/pyrimidine phosphoribosyltransferase family. Homodimer.

The protein localises to the cytoplasm. It catalyses the reaction AMP + diphosphate = 5-phospho-alpha-D-ribose 1-diphosphate + adenine. Its pathway is purine metabolism; AMP biosynthesis via salvage pathway; AMP from adenine: step 1/1. Its function is as follows. Catalyzes a salvage reaction resulting in the formation of AMP, that is energically less costly than de novo synthesis. The chain is Adenine phosphoribosyltransferase from Streptomyces galbus.